The chain runs to 91 residues: Elongation factor 1-beta (91 aa).

Belongs to the EF-1-beta/EF-1-delta family.

Promotes the exchange of GDP for GTP in EF-1-alpha/GDP, thus allowing the regeneration of EF-1-alpha/GTP that could then be used to form the ternary complex EF-1-alpha/GTP/AAtRNA. The chain is Elongation factor 1-beta (ef1b) from Pyrococcus horikoshii (strain ATCC 700860 / DSM 12428 / JCM 9974 / NBRC 100139 / OT-3).